A 298-amino-acid chain; its full sequence is Acetylglutamate kinase (298 aa).

Substrate contacts are provided by residues 69–70, R91, and N196; that span reads GG.

Belongs to the acetylglutamate kinase family. ArgB subfamily.

It localises to the cytoplasm. It catalyses the reaction N-acetyl-L-glutamate + ATP = N-acetyl-L-glutamyl 5-phosphate + ADP. It functions in the pathway amino-acid biosynthesis; L-arginine biosynthesis; N(2)-acetyl-L-ornithine from L-glutamate: step 2/4. Functionally, catalyzes the ATP-dependent phosphorylation of N-acetyl-L-glutamate. The chain is Acetylglutamate kinase from Nitrobacter winogradskyi (strain ATCC 25391 / DSM 10237 / CIP 104748 / NCIMB 11846 / Nb-255).